The primary structure comprises 216 residues: Protein-L-isoaspartate O-methyltransferase (216 aa).

S61 is a catalytic residue.

Belongs to the methyltransferase superfamily. L-isoaspartyl/D-aspartyl protein methyltransferase family.

Its subcellular location is the cytoplasm. It carries out the reaction [protein]-L-isoaspartate + S-adenosyl-L-methionine = [protein]-L-isoaspartate alpha-methyl ester + S-adenosyl-L-homocysteine. In terms of biological role, catalyzes the methyl esterification of L-isoaspartyl residues in peptides and proteins that result from spontaneous decomposition of normal L-aspartyl and L-asparaginyl residues. It plays a role in the repair and/or degradation of damaged proteins. In Dinoroseobacter shibae (strain DSM 16493 / NCIMB 14021 / DFL 12), this protein is Protein-L-isoaspartate O-methyltransferase.